Here is a 241-residue protein sequence, read N- to C-terminus: Octanoyltransferase (241 aa).

In terms of domain architecture, BPL/LPL catalytic spans Ala38–Leu227. Substrate contacts are provided by residues Arg85–His92, Ala157–Gly159, and Gly170–Ala172. Catalysis depends on Cys188, which acts as the Acyl-thioester intermediate.

The protein belongs to the LipB family.

Its subcellular location is the cytoplasm. It carries out the reaction octanoyl-[ACP] + L-lysyl-[protein] = N(6)-octanoyl-L-lysyl-[protein] + holo-[ACP] + H(+). It participates in protein modification; protein lipoylation via endogenous pathway; protein N(6)-(lipoyl)lysine from octanoyl-[acyl-carrier-protein]: step 1/2. Functionally, catalyzes the transfer of endogenously produced octanoic acid from octanoyl-acyl-carrier-protein onto the lipoyl domains of lipoate-dependent enzymes. Lipoyl-ACP can also act as a substrate although octanoyl-ACP is likely to be the physiological substrate. In Mycobacterium marinum (strain ATCC BAA-535 / M), this protein is Octanoyltransferase.